A 214-amino-acid chain; its full sequence is Cytochrome b (214 aa).

Helical transmembrane passes span 31-51 (FGSMLLACLMIQTVTGFFLAI), 75-96 (WIMQNTHAIGASMFFMCIYTHI), 111-131 (WLSGTTLLIVLMRTAFFGYVL), and 176-196 (FFALHFILPFIIISLSSIHII). Residues H81 and H95 each contribute to the heme b site. Residues H180 and H194 each contribute to the heme b site. H199 contacts a ubiquinone.

Belongs to the cytochrome b family. In terms of assembly, the cytochrome bc1 complex contains 3 respiratory subunits (MT-CYB, CYC1 and UQCRFS1), 2 core proteins (UQCRC1 and UQCRC2) and probably 6 low-molecular weight proteins. Requires heme b as cofactor.

The protein resides in the mitochondrion inner membrane. In terms of biological role, component of the ubiquinol-cytochrome c reductase complex (complex III or cytochrome b-c1 complex) that is part of the mitochondrial respiratory chain. The b-c1 complex mediates electron transfer from ubiquinol to cytochrome c. Contributes to the generation of a proton gradient across the mitochondrial membrane that is then used for ATP synthesis. This Cerastes cerastes (Horned desert viper) protein is Cytochrome b (MT-CYB).